The primary structure comprises 1534 residues: MAKQDPKDKNSDSPNLSIPINNNNNENLDNDQELLNNNNNNNNNNNNNNNNNNNNNNNNNNNNNLISSSRKHKDEESNYDSDDEKSVYQIAKEHEGEDDGDDEYFPIPLDELMPNHENDELTKKIKQTRPEDKTGLYVYCRNATYTVKHRENKKVKIKLIDDISFYLKPKEMTLILGTPGCGKSTIFQMLAGQLKDKHFKGELLFNGHPINHKNHHRDISYVTQDDIHVPTLTVKETFRFALDCLGRKELTNEEKKETVDNCMNLLGLKESENTVVGDNFVRGISGGQKKRVTIGVGVIKGSNLLLMDEPTSGLDSSTSFEILSDVKKFVTYGYSPALITLLQPSVQLTSLFDNLMILNKGRICYFGPMNKALGYFKKLGFACPSHNNPAEFFQEVVDAPERYSFIHPPKCKTSKDFVRAYRESEFYKDLMEKMDANKDGIVDDNKPKVLVDSTAKELGMYPHGIGYQTKICMKRGFTMIRRNYYNFLTRVAKGIFFGLLLGTLYWRIGHNQSGGMERFGLLFFIMVTIIFSSFAAVNSFFGERKVFYSQKALYYYKTGAYFISSIICDIPAGILEVAFFGPIVYWLANLRPVFIRFVYFMLLLIMTDNLSLSFAKMCAAISPTIEIANVIASVILSIWLLFSGFTAPKNDIGGWWIWLYYISPYTWIFQGLSINEFTYQEYGCKTSELIPPRTPQNLLPYPEGFGGNQVCQFTSGEQIMDAFGITNPNYFKWVVFGILSAYIVFFYVVCFFALKYFNFEDKKSKLAVKKLKKKKKVKTTKQDEESAAISSEALERIDDDNDDDADYETEIKKKKSHKKQKEDTVIDVKSPSSLTTGSPYYNINNNNNNLSGSGNNIKKRKVKTPSNLSPSVNSPITINSPMPTSPSNNNNNNNSNEKSKNGKDIGSETGSYLQFKKLCYAVDVKVDDPDNPKKKKSQRLQLLTDIDGYVKPGQMLALMGPSGAGKSTLLDVLAQRKTGGHITGEILINGKPPSEFTNRIRAYVEQMDVLPPTQTVREAIAFSARCRLPPEVTKEERESYVDKIVEVLSLSSIKDLKIGVLGDGLSVSQRKRVNIGVELASNPEILFLDEPTSGLDSGDAFKVIDVVNKIAKVMNRTVICTVHQPSAAIFEFFDQLLLLKQGGETIYFGPLGNQSSVILDYCDKLGMHIKPHINPADFVMTLADQGKMVEGPNGEQVPLDAKKAYFESDICKKEYEIMEGQLIPDDFVIKTYDSRFASSWMTQFRALCMRSWLSRLRRPAIFVSNCIRSILLAVLLGTLFVRMDYEQKDARSRVSLLFFSFLFAGMVAIGNIPTTVLERGVFYREVTAGFYHSTAYMTSYVLTSYPFTLSTGILYIIPTFWIAGLDSGRHSSKFWYCLFIFIITYVMYDAFGLCLAVCLPNEVMASTICGIGLSLSTLFGGFVIARPNYPSAYYWCHYLDWLRYPLEASCTNEFTGLTFVCTNNKGAVPIPIIENGVQIAIKYYCPITNGDDFMLTYGFHKFMRYIDIAAIFGYIFIFVGLSFWGFKKIRWFNR.

Residues 1–11 (MAKQDPKDKNS) show a composition bias toward basic and acidic residues. Residues 1-85 (MAKQDPKDKN…ESNYDSDDEK (85 aa)) form a disordered region. The span at 21–65 (NNNNNENLDNDQELLNNNNNNNNNNNNNNNNNNNNNNNNNNNNNL) shows a compositional bias: low complexity. The ABC transporter 1 domain maps to 138 to 385 (VYCRNATYTV…FKKLGFACPS (248 aa)). 177–184 (GTPGCGKS) serves as a coordination point for ATP. The ABC transmembrane type-2 1 domain occupies 481-757 (RRNYYNFLTR…VVCFFALKYF (277 aa)). 7 consecutive transmembrane segments (helical) span residues 486–506 (NFLTRVAKGIFFGLLLGTLYW), 521–541 (LLFFIMVTIIFSSFAAVNSFF), 566–586 (IICDIPAGILEVAFFGPIVYW), 592–612 (PVFIRFVYFMLLLIMTDNLSL), 625–645 (IEIANVIASVILSIWLLFSGF), 652–672 (IGGWWIWLYYISPYTWIFQGL), and 734–754 (VVFGILSAYIVFFYVVCFFAL). Residues 781–907 (KQDEESAAIS…KSKNGKDIGS (127 aa)) form a disordered region. Residues 797-808 (IDDDNDDDADYE) show a composition bias toward acidic residues. Positions 830-841 (SPSSLTTGSPYY) are enriched in polar residues. A compositionally biased stretch (low complexity) spans 842 to 856 (NINNNNNNLSGSGNN). Residues 864–873 (TPSNLSPSVN) show a composition bias toward polar residues. The segment covering 874–896 (SPITINSPMPTSPSNNNNNNNSN) has biased composition (low complexity). Positions 897-906 (EKSKNGKDIG) are enriched in basic and acidic residues. In terms of domain architecture, ABC transporter 2 spans 924–1166 (VKVDDPDNPK…VILDYCDKLG (243 aa)). 960 to 967 (GPSGAGKS) is a binding site for ATP. In terms of domain architecture, ABC transmembrane type-2 2 spans 1256–1529 (LRRPAIFVSN…GLSFWGFKKI (274 aa)). 6 helical membrane passes run 1261 to 1281 (IFVSNCIRSILLAVLLGTLFV), 1296 to 1316 (LLFFSFLFAGMVAIGNIPTTV), 1345 to 1365 (YPFTLSTGILYIIPTFWIAGL), 1377 to 1397 (CLFIFIITYVMYDAFGLCLAV), 1404 to 1424 (MASTICGIGLSLSTLFGGFVI), and 1506 to 1526 (IDIAAIFGYIFIFVGLSFWGF).

The protein belongs to the ABC transporter superfamily. ABCG family. PDR (TC 3.A.1.205) subfamily.

The protein localises to the membrane. The chain is ABC transporter G family member 6 (abcG6) from Dictyostelium discoideum (Social amoeba).